Reading from the N-terminus, the 273-residue chain is Cytoplasmic phosphatidylinositol transfer protein 1 (273 aa).

The disordered stretch occupies residues 244–273 (QAETNEKIHNTSGGANAAANAKEANDGDID).

Belongs to the PtdIns transfer protein family. PI transfer class IIB subfamily.

Phosphatidylinositol transfer proteins mediate the monomeric transport of lipids by shielding a lipid from the aqueous environment and binding the lipid in a hydrophobic cavity. This chain is Cytoplasmic phosphatidylinositol transfer protein 1 (rdgBbeta), found in Drosophila melanogaster (Fruit fly).